Consider the following 257-residue polypeptide: Putative hydro-lyase Bcep18194_B2576 (257 aa).

It belongs to the D-glutamate cyclase family.

This Burkholderia lata (strain ATCC 17760 / DSM 23089 / LMG 22485 / NCIMB 9086 / R18194 / 383) protein is Putative hydro-lyase Bcep18194_B2576.